The chain runs to 215 residues: Urease accessory protein UreG (215 aa).

A disordered region spans residues 1-21; that stretch reads MNAPASSPARRTKKLPPLRVG. Position 24–31 (24–31) interacts with GTP; that stretch reads GPVGSGKT.

It belongs to the SIMIBI class G3E GTPase family. UreG subfamily. In terms of assembly, homodimer. UreD, UreF and UreG form a complex that acts as a GTP-hydrolysis-dependent molecular chaperone, activating the urease apoprotein by helping to assemble the nickel containing metallocenter of UreC. The UreE protein probably delivers the nickel.

It localises to the cytoplasm. In terms of biological role, facilitates the functional incorporation of the urease nickel metallocenter. This process requires GTP hydrolysis, probably effectuated by UreG. The chain is Urease accessory protein UreG from Burkholderia vietnamiensis (strain G4 / LMG 22486) (Burkholderia cepacia (strain R1808)).